Here is a 466-residue protein sequence, read N- to C-terminus: Citrate synthase, mitochondrial (466 aa).

The transit peptide at 1-27 directs the protein to the mitochondrion; the sequence is MALLTAAARLFGAKNASCLVLAARHAS. Positions 2 to 21 match the SIFI-degron motif; the sequence is ALLTAAARLFGAKNASCLVL. Lys-57 is subject to N6-succinyllysine. An N6-acetyllysine; alternate modification is found at Lys-76. The residue at position 76 (Lys-76) is an N6-succinyllysine; alternate. N6-succinyllysine occurs at positions 103 and 193. Ser-226 is subject to Phosphoserine. His-301 is an active-site residue. N6-acetyllysine; alternate occurs at positions 321 and 327. 2 positions are modified to N6-succinyllysine; alternate: Lys-321 and Lys-327. The active site involves His-347. Arg-356 is a binding site for oxaloacetate. N6-acetyllysine; alternate is present on Lys-375. The residue at position 375 (Lys-375) is an N6-succinyllysine; alternate. N6-acetyllysine is present on Lys-382. Lys-393 carries the N6-acetyllysine; alternate modification. Lys-393 carries the post-translational modification N6-succinyllysine; alternate. At Lys-395 the chain carries N6,N6,N6-trimethyllysine. The active site involves Asp-402. Oxaloacetate contacts are provided by Arg-428 and Arg-448. At Lys-450 the chain carries N6-succinyllysine. Lys-459 bears the N6-acetyllysine; alternate mark. At Lys-459 the chain carries N6-succinyllysine; alternate.

The protein belongs to the citrate synthase family. In terms of assembly, homodimer. Post-translationally, methylated. Trimethylation at Lys-395 by CSKMT decreases citrate synthase activity. In terms of processing, in response to mitochondrial stress, the precursor protein is ubiquitinated by the SIFI complex in the cytoplasm before mitochondrial import, leading to its degradation. Within the SIFI complex, UBR4 initiates ubiquitin chain that are further elongated or branched by KCMF1.

The protein resides in the mitochondrion matrix. The enzyme catalyses oxaloacetate + acetyl-CoA + H2O = citrate + CoA + H(+). It participates in carbohydrate metabolism; tricarboxylic acid cycle; isocitrate from oxaloacetate: step 1/2. In terms of biological role, key enzyme of the Krebs tricarboxylic acid cycle which catalyzes the synthesis of citrate from acetyl coenzyme A and oxaloacetate. The chain is Citrate synthase, mitochondrial (CS) from Bos taurus (Bovine).